A 21-amino-acid polypeptide reads, in one-letter code: Tertiapin (21 aa).

2 disulfides stabilise this stretch: cysteine 3–cysteine 14 and cysteine 5–cysteine 18.

Oxidation of Met-13 results in the loss of biological activity. Post-translationally, an amidation at Lys-21 is suggested in Ref.1. In terms of tissue distribution, expressed by the venom gland.

The protein resides in the secreted. In terms of biological role, presynaptic neurotoxin that blocks the inwardly rectifying Kir1.1/KCNJ1 and Kir3.1/3.4 (KCNJ3/KCNJ5) potassium channels with high affinity by binding to the M1-M2 linker region of these channels in a 1:1 stoichiometry. It may block the potassium channel pore by occluding its alpha helix into the channel vestibule. Tertiapin-Q also inhibits calcium-activated large conductance BK-type (KCNMA) potassium channels in a concentration-, and voltage-dependent manner, in addition to inhibiting Kir3.1/3.2 (KCNJ3/KCNJ6) heteromultimers potassium channels. It can prevent dose-dependently acetylcholine(ACh)-induced atrioventricular blocks in mammalian hearts, as KCNJ3/KCNJ5 channels (also named I(KACh), because these channels are activated by ACh) are found in mammalian myocytes. Interacts specifically with calmodulin in the presence of calcium. The chain is Tertiapin from Apis mellifera (Honeybee).